Here is a 303-residue protein sequence, read N- to C-terminus: Dihydroorotate dehydrogenase B (NAD(+)), catalytic subunit (303 aa).

Residues serine 21 and 45 to 46 (KG) contribute to the FMN site. Substrate contacts are provided by residues lysine 45 and 69-73 (NCIGL). FMN-binding residues include asparagine 98 and asparagine 126. Asparagine 126 provides a ligand contact to substrate. The active-site Nucleophile is cysteine 129. The FMN site is built by lysine 165 and valine 191. Position 192–193 (192–193 (NT)) interacts with substrate. Residues glycine 217 and 243 to 244 (GG) each bind FMN.

It belongs to the dihydroorotate dehydrogenase family. Type 1 subfamily. Heterotetramer of 2 PyrK and 2 PyrD type B subunits. FMN is required as a cofactor.

The protein localises to the cytoplasm. It carries out the reaction (S)-dihydroorotate + NAD(+) = orotate + NADH + H(+). It participates in pyrimidine metabolism; UMP biosynthesis via de novo pathway; orotate from (S)-dihydroorotate (NAD(+) route): step 1/1. Functionally, catalyzes the conversion of dihydroorotate to orotate with NAD(+) as electron acceptor. This is Dihydroorotate dehydrogenase B (NAD(+)), catalytic subunit (pyrD) from Brachyspira hyodysenteriae (strain ATCC 49526 / WA1).